We begin with the raw amino-acid sequence, 292 residues long: uncharacterized protein (292 aa).

The tract at residues 62-81 is disordered; sequence ESSSDSDMGFHESQQNQKSN.

This is an uncharacterized protein from Homo sapiens (Human).